The chain runs to 637 residues: Clathrin coat assembly protein AP180A (637 aa).

In terms of domain architecture, ENTH spans 1–126; it reads MTTYFKLVKG…REFGKIKKDY (126 aa). The interval 555–637 is disordered; the sequence is TQNHLQQQQQ…YANNLNLIDM (83 aa). Composition is skewed to low complexity over residues 560–579 and 600–622; these read QQQQQQQQQQQQQQQQQPQQ and QPQNFPFYPQQQPQPEQSQTQQP. Residues 587–637 form a clathrin-binding region; sequence AGANPVTNITGTVQPQNFPFYPQQQPQPEQSQTQQPVLGNQYANNLNLIDM. Residues 623-637 are compositionally biased toward polar residues; that stretch reads VLGNQYANNLNLIDM.

The protein belongs to the AP180 family. In terms of assembly, interacts with PAN1 and the clathrin heavy and light chains CHC1 and CLC1.

It localises to the bud. The protein resides in the bud neck. The protein localises to the cell membrane. Its subcellular location is the cytoplasm. Its function is as follows. Involved in endocytosis and clathrin cage assembly. The polypeptide is Clathrin coat assembly protein AP180A (YAP1801) (Saccharomyces cerevisiae (strain ATCC 204508 / S288c) (Baker's yeast)).